A 301-amino-acid chain; its full sequence is Polyamine aminopropyltransferase (301 aa).

The region spanning 4–240 (WHWLLEWQTP…GLWGFVYGGV (237 aa)) is the PABS domain. Residue Q33 participates in S-methyl-5'-thioadenosine binding. H64 and E89 together coordinate spermidine. S-methyl-5'-thioadenosine-binding positions include D109 and 141 to 142 (DG). The active-site Proton acceptor is the D159.

It belongs to the spermidine/spermine synthase family. As to quaternary structure, homodimer or homotetramer.

It is found in the cytoplasm. The enzyme catalyses S-adenosyl 3-(methylsulfanyl)propylamine + putrescine = S-methyl-5'-thioadenosine + spermidine + H(+). It participates in amine and polyamine biosynthesis; spermidine biosynthesis; spermidine from putrescine: step 1/1. In terms of biological role, catalyzes the irreversible transfer of a propylamine group from the amino donor S-adenosylmethioninamine (decarboxy-AdoMet) to putrescine (1,4-diaminobutane) to yield spermidine. The polypeptide is Polyamine aminopropyltransferase (Saccharolobus islandicus (strain Y.N.15.51 / Yellowstone #2) (Sulfolobus islandicus)).